Reading from the N-terminus, the 396-residue chain is 8-amino-7-oxononanoate synthase (396 aa).

A substrate-binding site is contributed by arginine 31. 118–119 is a pyridoxal 5'-phosphate binding site; the sequence is GY. Histidine 143 contacts substrate. Positions 189, 217, and 245 each coordinate pyridoxal 5'-phosphate. Position 248 is an N6-(pyridoxal phosphate)lysine (lysine 248). Threonine 362 provides a ligand contact to substrate.

The protein belongs to the class-II pyridoxal-phosphate-dependent aminotransferase family. BioF subfamily. In terms of assembly, homodimer. Pyridoxal 5'-phosphate serves as cofactor.

The enzyme catalyses 6-carboxyhexanoyl-[ACP] + L-alanine + H(+) = (8S)-8-amino-7-oxononanoate + holo-[ACP] + CO2. The protein operates within cofactor biosynthesis; biotin biosynthesis. Its function is as follows. Catalyzes the decarboxylative condensation of pimeloyl-[acyl-carrier protein] and L-alanine to produce 8-amino-7-oxononanoate (AON), [acyl-carrier protein], and carbon dioxide. The polypeptide is 8-amino-7-oxononanoate synthase (Methylobacillus flagellatus (strain ATCC 51484 / DSM 6875 / VKM B-1610 / KT)).